A 445-amino-acid polypeptide reads, in one-letter code: Phosphoglucosamine mutase (445 aa).

The active-site Phosphoserine intermediate is Ser102. Positions 102, 241, 243, and 245 each coordinate Mg(2+). Phosphoserine is present on Ser102.

Belongs to the phosphohexose mutase family. Mg(2+) is required as a cofactor. In terms of processing, activated by phosphorylation.

The enzyme catalyses alpha-D-glucosamine 1-phosphate = D-glucosamine 6-phosphate. Functionally, catalyzes the conversion of glucosamine-6-phosphate to glucosamine-1-phosphate. The protein is Phosphoglucosamine mutase of Edwardsiella ictaluri (strain 93-146).